Here is a 372-residue protein sequence, read N- to C-terminus: Queuine tRNA-ribosyltransferase (372 aa).

The active-site Proton acceptor is Asp89. Substrate is bound by residues 89–93 (DSGGF), Asp161, and Gly232. Positions 262-268 (GIGDLPS) are RNA binding. Asp281 acts as the Nucleophile in catalysis. The tract at residues 286–290 (TKAAR) is RNA binding; important for wobble base 34 recognition. 4 residues coordinate Zn(2+): Cys319, Cys321, Cys324, and His351.

This sequence belongs to the queuine tRNA-ribosyltransferase family. In terms of assembly, homodimer. Within each dimer, one monomer is responsible for RNA recognition and catalysis, while the other monomer binds to the replacement base PreQ1. Zn(2+) serves as cofactor.

The catalysed reaction is 7-aminomethyl-7-carbaguanine + guanosine(34) in tRNA = 7-aminomethyl-7-carbaguanosine(34) in tRNA + guanine. It participates in tRNA modification; tRNA-queuosine biosynthesis. Catalyzes the base-exchange of a guanine (G) residue with the queuine precursor 7-aminomethyl-7-deazaguanine (PreQ1) at position 34 (anticodon wobble position) in tRNAs with GU(N) anticodons (tRNA-Asp, -Asn, -His and -Tyr). Catalysis occurs through a double-displacement mechanism. The nucleophile active site attacks the C1' of nucleotide 34 to detach the guanine base from the RNA, forming a covalent enzyme-RNA intermediate. The proton acceptor active site deprotonates the incoming PreQ1, allowing a nucleophilic attack on the C1' of the ribose to form the product. After dissociation, two additional enzymatic reactions on the tRNA convert PreQ1 to queuine (Q), resulting in the hypermodified nucleoside queuosine (7-(((4,5-cis-dihydroxy-2-cyclopenten-1-yl)amino)methyl)-7-deazaguanosine). This chain is Queuine tRNA-ribosyltransferase, found in Chlamydia muridarum (strain MoPn / Nigg).